A 34-amino-acid polypeptide reads, in one-letter code: Trypsin inhibitor (34 aa).

Intrachain disulfides connect cysteine 7–cysteine 29 and cysteine 11–cysteine 25.

The protein resides in the secreted. Its function is as follows. Inhibits trypsin. The protein is Trypsin inhibitor of Veronica hederifolia (Ivy-leaved speedwell).